The chain runs to 354 residues: 4-hydroxy-2-oxovalerate aldolase 6 (354 aa).

The region spanning 10 to 262 is the Pyruvate carboxyltransferase domain; the sequence is VRIVDTTLRD…ATGLDVMATL (253 aa). Substrate is bound at residue 18-19; that stretch reads RD. Aspartate 19 contacts Mn(2+). The Proton acceptor role is filled by histidine 22. Substrate-binding residues include serine 172 and histidine 201. Mn(2+)-binding residues include histidine 201 and histidine 203. Tyrosine 292 provides a ligand contact to substrate.

This sequence belongs to the 4-hydroxy-2-oxovalerate aldolase family.

The enzyme catalyses (S)-4-hydroxy-2-oxopentanoate = acetaldehyde + pyruvate. This is 4-hydroxy-2-oxovalerate aldolase 6 from Rhodococcus jostii (strain RHA1).